Consider the following 498-residue polypeptide: MASQGTKRSYEQMETGGERQNATEIRASVGRMIGGIGRFYIQMCTELKLSDYEGRLIQNSITIERMVLSAFDERRNKYLEEHPSAGKDPKKTGGPIYRRIDGKWIRELILYDKEEIRRIWRQANNGEDTTAGLTHMMIWHSNLNDATYQRTRALVRTGMDPRMCSLMQGSTLPRRSGAAGAAVKGVGTVVMELIRMIKRGINDRNFWRGENGRRTRIAYERMCNILKGKFQTAAQRAMMDQVRESRNPGNAEIEDLIFLARSALILRGSVAHKSCLPACVYGLAVASGHDFEREGYSLVGIDPFRLLQNSQVFSLIRPNENPAHKSQLVWMACHSAAFEDLRVSSFIRGKRVVPRGQLSTRGVQIASNENMETMDSSTLELRSRYWAIRTRSGGNTNQQRASAGQISVQPTFSVQRNLPFERATVMAAFTGNTEGRTSDMRTEIIRIMESARPEDVSFQGRGVFELSDEKATSPIVPSFDMSNEGSYFFGDNAEEYDN.

The short motif at 1 to 18 (MASQGTKRSYEQMETGGE) is the Unconventional nuclear localization signal element. Residues 1-21 (MASQGTKRSYEQMETGGERQN) form a disordered region. The Bipartite nuclear localization signal signature appears at 198–216 (KRGINDRNFWRGENGRRTR).

Belongs to the influenza viruses nucleoprotein family. As to quaternary structure, homomultimerizes to form the nucleocapsid. May bind host exportin-1/XPO1. Binds to viral genomic RNA. Protein-RNA contacts are mediated by a combination of electrostatic interactions between positively charged residues and the phosphate backbone and planar interactions between aromatic side chains and bases. In terms of processing, late in virus-infected cells, may be cleaved from a 56-kDa protein to a 53-kDa protein by a cellular caspase. This cleavage might be a marker for the onset of apoptosis in infected cells or have a specific function in virus host interaction.

The protein resides in the virion. The protein localises to the host nucleus. Encapsidates the negative strand viral RNA, protecting it from nucleases. The encapsidated genomic RNA is termed the ribonucleoprotein (RNP) and serves as template for transcription and replication. The RNP needs to be localized in the host nucleus to start an infectious cycle, but is too large to diffuse through the nuclear pore complex. NP comprises at least 2 nuclear localization signals that are responsible for the active RNP import into the nucleus through cellular importin alpha/beta pathway. Later in the infection, nclear export of RNPs are mediated through viral proteins NEP interacting with M1 which binds nucleoproteins. It is possible that nucleoprotein binds directly host exportin-1/XPO1 and plays an active role in RNPs nuclear export. M1 interaction with RNP seems to hide nucleoprotein's nuclear localization signals. Soon after a virion infects a new cell, M1 dissociates from the RNP under acidification of the virion driven by M2 protein. Dissociation of M1 from RNP unmasks nucleoprotein's nuclear localization signals, targeting the RNP to the nucleus. This chain is Nucleoprotein, found in Influenza A virus (strain A/Swine/Iowa/15/1930 H1N1).